Here is a 309-residue protein sequence, read N- to C-terminus: DSC E3 ubiquitin ligase complex subunit C (309 aa).

Asn61 is a glycosylation site (N-linked (GlcNAc...) asparagine). Disordered stretches follow at residues 88-110 (LPPSPSRTPVVQEDATTVKGKGK) and 148-177 (EQADEDYTGRKKQQQPPPSTTSAPRGFDRL). Transmembrane regions (helical) follow at residues 257–277 (DDMLWGAVMGFFWPVGCAMWL) and 289–309 (GLAVFVGVVINVAFGAMRIMN).

Belongs to the dsc3 family. As to quaternary structure, component of the DSC E3 ubiquitin ligase complex composed of dscA, dscB, dscC and dscD.

It is found in the endoplasmic reticulum membrane. It functions in the pathway protein modification; protein ubiquitination. Its function is as follows. Component of the DSC E3 ubiquitin ligase complex which is required for the srbA transcriptional activator proteolytic cleavage to release the soluble transcription factor from the membrane in low oxygen or sterol conditions. Required for growth during hypoxia and triazole drug susceptibility, as well as for virulence in a murine model of invasive pulmonary aspergillosis (IPA). The polypeptide is DSC E3 ubiquitin ligase complex subunit C (Aspergillus fumigatus (strain ATCC MYA-4609 / CBS 101355 / FGSC A1100 / Af293) (Neosartorya fumigata)).